Reading from the N-terminus, the 492-residue chain is Ketol-acid reductoisomerase (NADP(+)) (492 aa).

One can recognise a KARI N-terminal Rossmann domain in the interval 15-208 (AQLGKCRFMA…GGHRAGVLES (194 aa)). Residues 45-48 (CGAQ), Arg68, Arg76, Ser78, and 108-110 (DKQ) contribute to the NADP(+) site. Residue His132 is part of the active site. Residue Gly158 participates in NADP(+) binding. 2 consecutive KARI C-terminal knotted domains span residues 209 to 344 (SFVA…NAPQ) and 345 to 485 (FEGK…MTDM). Residues Asp217, Glu221, Glu389, and Glu393 each coordinate Mg(2+). Ser414 lines the substrate pocket.

This sequence belongs to the ketol-acid reductoisomerase family. Mg(2+) is required as a cofactor.

The enzyme catalyses (2R)-2,3-dihydroxy-3-methylbutanoate + NADP(+) = (2S)-2-acetolactate + NADPH + H(+). The catalysed reaction is (2R,3R)-2,3-dihydroxy-3-methylpentanoate + NADP(+) = (S)-2-ethyl-2-hydroxy-3-oxobutanoate + NADPH + H(+). Its pathway is amino-acid biosynthesis; L-isoleucine biosynthesis; L-isoleucine from 2-oxobutanoate: step 2/4. The protein operates within amino-acid biosynthesis; L-valine biosynthesis; L-valine from pyruvate: step 2/4. In terms of biological role, involved in the biosynthesis of branched-chain amino acids (BCAA). Catalyzes an alkyl-migration followed by a ketol-acid reduction of (S)-2-acetolactate (S2AL) to yield (R)-2,3-dihydroxy-isovalerate. In the isomerase reaction, S2AL is rearranged via a Mg-dependent methyl migration to produce 3-hydroxy-3-methyl-2-ketobutyrate (HMKB). In the reductase reaction, this 2-ketoacid undergoes a metal-dependent reduction by NADPH to yield (R)-2,3-dihydroxy-isovalerate. This is Ketol-acid reductoisomerase (NADP(+)) from Yersinia pseudotuberculosis serotype O:3 (strain YPIII).